Reading from the N-terminus, the 410-residue chain is Peptidase T (410 aa).

His-78 provides a ligand contact to Zn(2+). The active site involves Asp-80. Asp-140 lines the Zn(2+) pocket. The active-site Proton acceptor is the Glu-173. Zn(2+) is bound by residues Glu-174, Asp-196, and His-379.

The protein belongs to the peptidase M20B family. The cofactor is Zn(2+).

The protein localises to the cytoplasm. It carries out the reaction Release of the N-terminal residue from a tripeptide.. Its function is as follows. Cleaves the N-terminal amino acid of tripeptides. This chain is Peptidase T, found in Pectobacterium carotovorum subsp. carotovorum (strain PC1).